The chain runs to 205 residues: Protein GrpE (205 aa).

Basic and acidic residues predominate over residues 1–18; the sequence is MSEEVKNSVETEENKASK. Residues 1 to 60 form a disordered region; that stretch reads MSEEVKNSVETEENKASKDNATQAPNPTENHNTAQETEKAENSEKTESATQENESLDKLK. Polar residues predominate over residues 19 to 35; it reads DNATQAPNPTENHNTAQ. The segment covering 36–47 has biased composition (basic and acidic residues); it reads ETEKAENSEKTE.

The protein belongs to the GrpE family. Homodimer.

Its subcellular location is the cytoplasm. Its function is as follows. Participates actively in the response to hyperosmotic and heat shock by preventing the aggregation of stress-denatured proteins, in association with DnaK and GrpE. It is the nucleotide exchange factor for DnaK and may function as a thermosensor. Unfolded proteins bind initially to DnaJ; upon interaction with the DnaJ-bound protein, DnaK hydrolyzes its bound ATP, resulting in the formation of a stable complex. GrpE releases ADP from DnaK; ATP binding to DnaK triggers the release of the substrate protein, thus completing the reaction cycle. Several rounds of ATP-dependent interactions between DnaJ, DnaK and GrpE are required for fully efficient folding. This chain is Protein GrpE, found in Chloroherpeton thalassium (strain ATCC 35110 / GB-78).